A 775-amino-acid polypeptide reads, in one-letter code: Protein STRUBBELIG-RECEPTOR FAMILY 1 (775 aa).

The signal sequence occupies residues methionine 1 to alanine 31. At leucine 32–arginine 314 the chain is on the extracellular side. LRR repeat units lie at residues serine 101–valine 122, serine 123–lysine 146, serine 147–leucine 169, leucine 171–leucine 193, threonine 195–proline 217, and leucine 218–serine 238. Asparagine 133 carries an N-linked (GlcNAc...) asparagine glycan. 2 N-linked (GlcNAc...) asparagine glycosylation sites follow: asparagine 181 and asparagine 192. An N-linked (GlcNAc...) asparagine glycan is attached at asparagine 250. Positions alanine 254–aspartate 308 are disordered. Residues serine 256–proline 278 are compositionally biased toward pro residues. An N-linked (GlcNAc...) asparagine glycan is attached at asparagine 279. A helical membrane pass occupies residues isoleucine 315–leucine 335. The Cytoplasmic portion of the chain corresponds to cysteine 336–arginine 775. The interval glutamate 345 to histidine 414 is disordered. Positions arginine 367–phenylalanine 379 are enriched in polar residues. The span at asparagine 380–valine 391 shows a compositional bias: basic and acidic residues. The Protein kinase domain maps to phenylalanine 478 to isoleucine 756.

The protein belongs to the protein kinase superfamily. Ser/Thr protein kinase family. Expressed in roots, stems, leaves and flowers. Low expression in seedlings and siliques.

The protein localises to the membrane. In terms of biological role, not essential for epidermal patterning and not redundant with STRUBBELIG. This is Protein STRUBBELIG-RECEPTOR FAMILY 1 (SRF1) from Arabidopsis thaliana (Mouse-ear cress).